A 35-amino-acid chain; its full sequence is Mu-theraphotoxin-Hd1a (35 aa).

Cystine bridges form between Cys-2–Cys-17, Cys-9–Cys-24, and Cys-16–Cys-31.

Belongs to the neurotoxin 10 (Hwtx-1) family. 22 (Htx-4) subfamily. As to expression, expressed by the venom gland.

It localises to the secreted. Gating-modifier toxin that reversibly and voltage-independently inhibits human Nav1.1/SCN1A and Nav1.7/SCN9A (IC(50)=111 nM). It also shows moderate inhibition on Nav1.2/SCN2A (1 uM inhibits current by 55%), Nav1.6/SCN8A (31%), Nav1.3/SCN5A (27%) and Nav1.4/SCN4A (23%). This toxin inhibits Nav1.7/SCN9A by interacting with the S3b-S4 paddle motif in channel domain II. In Cyriopagopus doriae (Tarantula spider), this protein is Mu-theraphotoxin-Hd1a.